The chain runs to 364 residues: Spermidine/putrescine import ATP-binding protein PotA (364 aa).

The ABC transporter domain occupies 6-236; that stretch reads IEIRQIYKSY…PANLHVAMFI (231 aa). 38–45 contributes to the ATP binding site; that stretch reads GPSGCGKT.

Belongs to the ABC transporter superfamily. Spermidine/putrescine importer (TC 3.A.1.11.1) family. As to quaternary structure, the complex is composed of two ATP-binding proteins (PotA), two transmembrane proteins (PotB and PotC) and a solute-binding protein (PotD).

The protein localises to the cell inner membrane. It catalyses the reaction ATP + H2O + polyamine-[polyamine-binding protein]Side 1 = ADP + phosphate + polyamineSide 2 + [polyamine-binding protein]Side 1.. In terms of biological role, part of the ABC transporter complex PotABCD involved in spermidine/putrescine import. Responsible for energy coupling to the transport system. The chain is Spermidine/putrescine import ATP-binding protein PotA from Legionella pneumophila subsp. pneumophila (strain Philadelphia 1 / ATCC 33152 / DSM 7513).